The sequence spans 387 residues: Putative F-box protein At1g47800 (387 aa).

The region spanning 8-54 (LQSLDHIPIDVLFEILVKLPAKSVARFLCVSKVWATMIRGEVFIRSF) is the F-box domain.

The sequence is that of Putative F-box protein At1g47800 from Arabidopsis thaliana (Mouse-ear cress).